Reading from the N-terminus, the 199-residue chain is Adenylyl-sulfate kinase (199 aa).

The interval 1 to 21 (MSQSSNITWHDSEVTKSDRQQ) is disordered. Residues 10–19 (HDSEVTKSDR) show a composition bias toward basic and acidic residues. 34–41 (GLSGSGKS) is an ATP binding site. Residue Ser108 is the Phosphoserine intermediate of the active site.

This sequence belongs to the APS kinase family.

It carries out the reaction adenosine 5'-phosphosulfate + ATP = 3'-phosphoadenylyl sulfate + ADP + H(+). It functions in the pathway sulfur metabolism; hydrogen sulfide biosynthesis; sulfite from sulfate: step 2/3. Functionally, catalyzes the synthesis of activated sulfate. In Staphylococcus haemolyticus (strain JCSC1435), this protein is Adenylyl-sulfate kinase.